The following is a 292-amino-acid chain: Putative FNIP repeat-containing protein L281 (292 aa).

One copy of the FNIP repeat lies at 95-134 (FNKSIDDIPSTITHLSLGAAFNGEVSNIPTSVTHLKLGVS).

In Acanthamoeba polyphaga mimivirus (APMV), this protein is Putative FNIP repeat-containing protein L281.